The primary structure comprises 499 residues: Replication factor C large subunit (499 aa).

Residue 50–57 (GPPGVGKT) participates in ATP binding. The interval 428 to 499 (EAERRVEAAE…QATLFDFLKK (72 aa)) is disordered. The segment covering 436–472 (AEEEETMEAGEPEEELEEVEEEELTEEELEEAEEEIE) has biased composition (acidic residues). The span at 473-484 (TVGKKEKPEKEK) shows a compositional bias: basic and acidic residues.

Belongs to the activator 1 small subunits family. RfcL subfamily. As to quaternary structure, heteromultimer composed of small subunits (RfcS) and large subunits (RfcL).

Functionally, part of the RFC clamp loader complex which loads the PCNA sliding clamp onto DNA. The polypeptide is Replication factor C large subunit (Thermococcus kodakarensis (strain ATCC BAA-918 / JCM 12380 / KOD1) (Pyrococcus kodakaraensis (strain KOD1))).